Here is a 154-residue protein sequence, read N- to C-terminus: Endoribonuclease YbeY (154 aa).

Zn(2+) contacts are provided by His113, His117, and His123.

It belongs to the endoribonuclease YbeY family. Zn(2+) is required as a cofactor.

The protein resides in the cytoplasm. Its function is as follows. Single strand-specific metallo-endoribonuclease involved in late-stage 70S ribosome quality control and in maturation of the 3' terminus of the 16S rRNA. The polypeptide is Endoribonuclease YbeY (Vibrio parahaemolyticus serotype O3:K6 (strain RIMD 2210633)).